Here is a 3674-residue protein sequence, read N- to C-terminus: Spectrin beta chain, non-erythrocytic 5 (3674 aa).

The tract at residues 1–37 is disordered; it reads MAGQPHSPRELLGAAGHRSRRPSTELRVPPSPSLTMD. Residues 1-279 are actin-binding; it reads MAGQPHSPRE…IMTYVSLYYH (279 aa). Calponin-homology (CH) domains follow at residues 54 to 159 and 177 to 282; these read QMQE…LRFQ and LSTK…HYCS. Spectrin repeat units follow at residues 307 to 416, 428 to 529, 642 to 742, 747 to 810, 900 to 996, 1103 to 1206, 1209 to 1311, and 1315 to 1417; these read LQTQ…ALQQ, ARRF…RKQV, AEFL…ARLQ, VLQY…QGRA, GFCS…AVQL, ARQS…WLQE, ELQK…RQLL, and QLQE…ELQQ. The disordered stretch occupies residues 1441–1469; that stretch reads ALQSSETGQDLRSSQRLQKRHQQLESESR. A compositionally biased stretch (polar residues) spans 1442 to 1456; the sequence is LQSSETGQDLRSSQR. 19 Spectrin repeats span residues 1521–1624, 1628–1727, 1731–1835, 1842–1940, 1944–2046, 2052–2146, 2150–2253, 2256–2361, 2366–2467, 2471–2574, 2577–2680, 2683–2784, 2791–2890, 2894–2997, 3000–3103, 3106–3209, 3213–3311, 3318–3415, and 3422–3488; these read ELHQ…CLQQ, FQQY…RELE, RLHE…ALRD, VHRD…AQLE, LLAR…ERLQ, QLFL…HALH, LMAS…ELED, NFLE…QQLE, IHVL…EALD, QAQK…QLQQ, ELQL…RLEE, QLQA…AKLQ, RLRR…TALE, LLLK…LLQQ, EAQQ…GLQE, QLHQ…ENLA, EVHS…QWLA, AFLG…RWQR, and LQKL…EQEL. Residues 3533 to 3641 enclose the PH domain; the sequence is TPTMEGSLEF…WWRALGSTAA (109 aa).

Belongs to the spectrin family. As to quaternary structure, probably associates with an alpha chain. Interacts (via C-terminus) with TRPC4. In terms of tissue distribution, expressed at very low levels in many tissues, with strongest expression in cerebellum, spinal cord, stomach, pituitary gland, liver, pancreas, salivary gland, kidney, bladder, and heart.

It localises to the cytoplasm. Its subcellular location is the cytoskeleton. The sequence is that of Spectrin beta chain, non-erythrocytic 5 (SPTBN5) from Homo sapiens (Human).